The following is a 114-amino-acid chain: PDZK1-interacting protein 1 (114 aa).

Over 1–28 the chain is Extracellular; that stretch reads MSVLSLVVLSLLMALPPASCQQGRGNLQ. A helical transmembrane segment spans residues 29–51; the sequence is PWMQGLIAVAVFLVLVAIAFAVN. At 52–114 the chain is on the cytoplasmic side; the sequence is HFWCQEKPAP…EEGKVCSTPM (63 aa). A Phosphoserine modification is found at serine 85.

This sequence belongs to the PDZK1-interacting protein 1/SMIM24 family. Forms a heterodimer (via N-terminal transmembrane helix) with SLC5A2/SGLT2 (via TM13); this interaction enhances SLC5A2 transporter activity. Interacts with PDZK1.

The protein resides in the apical cell membrane. In terms of biological role, auxiliary protein of electrogenic Na(+)-coupled sugar symporter SLC5A2/SGLT2 and SLC5A1/SGLT1. Essential for the transporter activity of SLC5A2/SGLT2 but not SLC5A1/SGLT1. This chain is PDZK1-interacting protein 1, found in Bos taurus (Bovine).